We begin with the raw amino-acid sequence, 233 residues long: Germin-like protein (233 aa).

The signal sequence occupies residues 1-22 (MEAYKMFAFVVLLATTLYQAYA). Cysteine 32 and cysteine 49 are oxidised to a cystine. The Cupin type-1 domain maps to 63-215 (RGLNMPANTD…RPSISMRIWS (153 aa)). Histidine 111, histidine 113, glutamate 118, and histidine 162 together coordinate Mn(2+).

Belongs to the germin family. Oligomer (believed to be a pentamer but probably hexamer). Expressed at high levels in unstressed roots.

Its subcellular location is the secreted. The protein localises to the extracellular space. It localises to the apoplast. In terms of biological role, may be involved in seed germination. This chain is Germin-like protein, found in Mesembryanthemum crystallinum (Common ice plant).